Consider the following 391-residue polypeptide: D-gluconate/D-galactonate dehydratase (391 aa).

Residue Glu-198 participates in Mg(2+) binding. His-200 (proton donor) is an active-site residue. Positions 224 and 250 each coordinate Mg(2+). Residue His-300 is the Proton acceptor of the active site.

The protein belongs to the mandelate racemase/muconate lactonizing enzyme family. GaD subfamily. Homooctamer. Mg(2+) serves as cofactor.

The catalysed reaction is D-gluconate = 2-dehydro-3-deoxy-D-gluconate + H2O. The enzyme catalyses D-galactonate = 2-dehydro-3-deoxy-D-galactonate + H2O. Its pathway is carbohydrate acid metabolism; D-gluconate degradation. Its function is as follows. Involved in the degradation of glucose and galactose via the nonphosphorylative variant of Entner-Doudoroff pathway. Catalyzes the dehydration of gluconate to produce 2-keto-3-deoxygluconate (KDG). It is also able to catalyze the dehydration of galactonate to produce 2-keto-3-deoxygalactonate (KDGal). In Picrophilus torridus (strain ATCC 700027 / DSM 9790 / JCM 10055 / NBRC 100828 / KAW 2/3), this protein is D-gluconate/D-galactonate dehydratase.